Here is a 418-residue protein sequence, read N- to C-terminus: Transcription termination factor Rho (418 aa).

In terms of domain architecture, Rho RNA-BD spans 48–123 (SIFGEGTLEV…VKVDKVNGEA (76 aa)). Residues 169-174 (GKGQRA), 181-186 (KSGKTV), and Arg212 each bind ATP.

Belongs to the Rho family. As to quaternary structure, homohexamer. The homohexamer assembles into an open ring structure.

Functionally, facilitates transcription termination by a mechanism that involves Rho binding to the nascent RNA, activation of Rho's RNA-dependent ATPase activity, and release of the mRNA from the DNA template. This is Transcription termination factor Rho from Chromobacterium violaceum (strain ATCC 12472 / DSM 30191 / JCM 1249 / CCUG 213 / NBRC 12614 / NCIMB 9131 / NCTC 9757 / MK).